Here is a 499-residue protein sequence, read N- to C-terminus: Alpha-internexin (499 aa).

The tract at residues 1 to 87 is head; sequence MSFGSEHYLC…SQAAARTNEY (87 aa). Residue Ser72 is modified to Phosphoserine. The segment at 88–129 is coil 1A; the sequence is KIIRTNEKEQLQGLNDRFAVFIEKVHQLETQNRALEAELAAL. Residues 94-407 form the IF rod domain; it reads EKEQLQGLND…KLLEGEETRF (314 aa). Residues 130–142 form a linker 1 region; that stretch reads RQRHAEPSRVGEL. Positions 143–238 are coil 1B; the sequence is FQRELRDLRA…QVHDEEVAEL (96 aa). The residue at position 219 (Ser219) is a Phosphoserine. The segment at 239-262 is linker 2; it reads LATLQASSQAAAEVDVTVAKPDLT. The interval 263–408 is coil 2; sequence SALREIRAQY…LLEGEETRFS (146 aa). The residue at position 290 (Lys290) is an N6-acetyllysine. Residue Ser335 is modified to Phosphoserine. The interval 409-499 is tail; it reads TSGLSISGLN…EETTISSQKI (91 aa). The disordered stretch occupies residues 441–466; sequence STGLSLKKEEEEEEASKVASKKTSQI. A phosphoserine mark is found at Ser469 and Ser496.

Belongs to the intermediate filament family. In terms of assembly, forms homodimers (in vitro). Forms heterodimers with NEFL, NEFM or NEFH (in vitro). Post-translationally, O-glycosylated. Found predominantly in adult CNS.

Functionally, class-IV neuronal intermediate filament that is able to self-assemble. It is involved in the morphogenesis of neurons. It may form an independent structural network without the involvement of other neurofilaments or it may cooperate with NEFL to form the filamentous backbone to which NEFM and NEFH attach to form the cross-bridges. May also cooperate with the neuronal intermediate filament protein PRPH to form filamentous networks. The polypeptide is Alpha-internexin (INA) (Homo sapiens (Human)).